The sequence spans 862 residues: Dipeptidyl peptidase 9 (862 aa).

Residues S729, D807, and H839 each act as charge relay system in the active site. S729 is a Val-boroPro binding site.

This sequence belongs to the peptidase S9B family. DPPIV subfamily. As to quaternary structure, homodimer. Forms a ternary complex with NLRP1, composed of a DPP9 homodimer, one full-length NLRP1 protein, and one cleaved C-terminus of NLRP1 (NACHT, LRR and PYD domains-containing protein 1, C-terminus). Forms a ternary complex with CARD8, composed of a DPP9 homodimer, one full-length NLRP1 protein, and one cleaved C-terminus of CARD8 (Caspase recruitment domain-containing protein 8, C-terminus). In the ternary complex, only one subunit of the DPP9 homodimer is bound to NLRP1 or CARD8. In terms of tissue distribution, detected in kidney, skin, brain, thymus and liver (at protein level).

It is found in the cytoplasm. It localises to the cytosol. The catalysed reaction is Release of an N-terminal dipeptide, Xaa-Yaa-|-Zaa-, from a polypeptide, preferentially when Yaa is Pro, provided Zaa is neither Pro nor hydroxyproline.. Its activity is regulated as follows. Inhibited by the serine proteinase inhibitor 4-(2-aminoethyl)benzenesulphonyl fluoride (AEBSF), and by di-isopropylfluorophosphate. Inhibited by Val-boroPro (Talabostat, PT-100), a non-selective inhibitor, which triggers pyroptosis in monocytes and macrophages. Val-boroPro inhibits activity by binding to the active site, mimicking a substrate-bound state, thereby displacing the C-terminal fragment of NLRP1, leading to activation of the NLRP1 inflammasome. In contrast, Val-boroPro does not directly displaces CARD8: it acts by promoting degradation of the N-terminal part of CARD8, leading to indirect disruption of the ternary complex. In terms of biological role, dipeptidyl peptidase that cleaves off N-terminal dipeptides from proteins having a Pro or Ala residue at position 2. Acts as a key inhibitor of caspase-1-dependent monocyte and macrophage pyroptosis in resting cells by preventing activation of NLRP1 and CARD8. Sequesters the cleaved C-terminal part of NLRP1 and CARD8, which respectively constitute the active part of the NLRP1 and CARD8 inflammasomes, in a ternary complex, thereby preventing their oligomerization and activation. The dipeptidyl peptidase activity is required to suppress NLRP1 and CARD8; however, neither NLRP1 nor CARD8 are bona fide substrates of DPP9, suggesting the existence of substrate(s) required for NLRP1 and CARD8 inhibition. This Mus musculus (Mouse) protein is Dipeptidyl peptidase 9.